Consider the following 406-residue polypeptide: 3-oxoacyl-[acyl-carrier-protein] synthase 1 (406 aa).

Residues methionine 1 to lysine 403 form the Ketosynthase family 3 (KS3) domain. Catalysis depends on for beta-ketoacyl synthase activity residues cysteine 163, histidine 298, and histidine 333.

The protein belongs to the thiolase-like superfamily. Beta-ketoacyl-ACP synthases family. As to quaternary structure, homodimer.

It is found in the cytoplasm. The catalysed reaction is a fatty acyl-[ACP] + malonyl-[ACP] + H(+) = a 3-oxoacyl-[ACP] + holo-[ACP] + CO2. The enzyme catalyses (3Z)-decenoyl-[ACP] + malonyl-[ACP] + H(+) = 3-oxo-(5Z)-dodecenoyl-[ACP] + holo-[ACP] + CO2. The protein operates within lipid metabolism; fatty acid biosynthesis. Involved in the type II fatty acid elongation cycle. Catalyzes the elongation of a wide range of acyl-ACP by the addition of two carbons from malonyl-ACP to an acyl acceptor. Can also use unsaturated fatty acids. Catalyzes a key reaction in unsaturated fatty acid (UFA) synthesis, the elongation of the cis-3-decenoyl-ACP produced by FabA. The polypeptide is 3-oxoacyl-[acyl-carrier-protein] synthase 1 (fabB) (Escherichia coli O6:H1 (strain CFT073 / ATCC 700928 / UPEC)).